The sequence spans 492 residues: uncharacterized protein (492 aa).

266 to 273 (GIQGTGKS) contacts ATP.

This sequence belongs to the AAA ATPase family. Highly divergent.

Its subcellular location is the plastid. The protein localises to the chloroplast. This is an uncharacterized protein from Pyropia yezoensis (Susabi-nori).